Consider the following 327-residue polypeptide: Phenylalanine--tRNA ligase alpha subunit (327 aa).

Glu-252 contributes to the Mg(2+) binding site.

Belongs to the class-II aminoacyl-tRNA synthetase family. Phe-tRNA synthetase alpha subunit type 1 subfamily. In terms of assembly, tetramer of two alpha and two beta subunits. It depends on Mg(2+) as a cofactor.

The protein localises to the cytoplasm. The catalysed reaction is tRNA(Phe) + L-phenylalanine + ATP = L-phenylalanyl-tRNA(Phe) + AMP + diphosphate + H(+). This Shewanella sediminis (strain HAW-EB3) protein is Phenylalanine--tRNA ligase alpha subunit.